Here is an 852-residue protein sequence, read N- to C-terminus: DNA double-strand break repair Rad50 ATPase (852 aa).

The ATP site is built by Asn-32, Gly-33, Ala-34, Gly-35, Lys-36, Ser-37, Ser-38, Arg-53, Tyr-54, Asp-59, Val-61, and Arg-63. Ser-37 provides a ligand contact to Mg(2+). Gln-142 is a binding site for Mg(2+). Coiled-coil stretches lie at residues 155-345 and 389-427; these read EITE…EELD and LLSI…QIAS. Residues 389–488 form the Zinc-hook domain; that stretch reads LLSIEKTENE…SLSSLIEDLL (100 aa). Zn(2+) contacts are provided by Cys-435 and Cys-438. Coiled coils occupy residues 460 to 488 and 534 to 711; these read DQKR…EDLL and KIEE…LFDK. Asp-797 is a Mg(2+) binding site.

This sequence belongs to the SMC family. RAD50 subfamily. As to quaternary structure, homodimer. Forms a complex with Mre11. It depends on Zn(2+) as a cofactor.

It catalyses the reaction ATP + H2O = ADP + phosphate + H(+). Functionally, involved in DNA double-strand break repair (DSBR). The Rad50/Mre11 complex possesses single-strand endonuclease activity and ATP-dependent double-strand-specific 3'-5' exonuclease activity. Rad50 provides an ATP-dependent control of Mre11 by positioning DNA ends into the Mre11 active site: ATP-binding induces a large structural change from an open form with accessible Mre11 nuclease sites into a closed form. The protein is DNA double-strand break repair Rad50 ATPase of Thermotoga maritima (strain ATCC 43589 / DSM 3109 / JCM 10099 / NBRC 100826 / MSB8).